We begin with the raw amino-acid sequence, 790 residues long: Pleckstrin homology domain-containing family G member 6 (790 aa).

The interval 63-91 (SGQARGLSPMRLRDPEPEKRHGGHVGAGL) is disordered. Residues 73–82 (RLRDPEPEKR) are compositionally biased toward basic and acidic residues. Positions 161 to 353 (HQQEALWELL…ESFLRHINGQ (193 aa)) constitute a DH domain. In terms of domain architecture, PH spans 409-509 (QLLLEGPVRV…WLEKTQQAQA (101 aa)). 2 stretches are compositionally biased toward basic and acidic residues: residues 529–538 (LYRDQDRESP) and 625–635 (ELRDIPLRPHP). Disordered regions lie at residues 529-677 (LYRD…ASER), 690-730 (LRGQ…HTSL), and 748-790 (SQRI…ASEV). A compositionally biased stretch (basic and acidic residues) spans 748-762 (SQRIEGAEEPRDSRP).

Interacts with MYH10. Interacts with ELMO1 and EZR (in an open conformation). Interacts with CSPP1. As to expression, highest expression in the placenta. Low levels in small intestine, lung, liver, kidney, thymus and heart.

Its subcellular location is the cell projection. It is found in the microvillus. It localises to the cytoplasm. The protein resides in the cytoskeleton. The protein localises to the spindle. Its subcellular location is the spindle pole. It is found in the cleavage furrow. Guanine nucleotide exchange factor activating the small GTPase RHOA, which, in turn, induces myosin filament formation. Also activates RHOG. Does not activate RAC1, or to a much lower extent than RHOA and RHOG. Part of a functional unit, involving PLEKHG6, MYH10 and RHOA, at the cleavage furrow to advance furrow ingression during cytokinesis. In epithelial cells, required for the formation of microvilli and membrane ruffles on the apical pole. Along with EZR, required for normal macropinocytosis. This chain is Pleckstrin homology domain-containing family G member 6 (PLEKHG6), found in Homo sapiens (Human).